The sequence spans 122 residues: Cytochrome b-c1 complex subunit 7-2, mitochondrial (122 aa).

The protein belongs to the UQCRB/QCR7 family. Component of the ubiquinol-cytochrome c oxidoreductase (cytochrome b-c1 complex, complex III, CIII), a multisubunit enzyme composed of 10 subunits. The complex is composed of 3 respiratory subunits cytochrome b (MT-CYB), cytochrome c1 (CYC1-1 or CYC1-2) and Rieske protein (UCR1-1 or UCR1-2), 2 core protein subunits MPPalpha1 (or MPPalpha2) and MPPB, and 5 low-molecular weight protein subunits QCR7-1 (or QCR7-2), UCRQ-1 (or UCRQ-2), QCR9, UCRY and probably QCR6-1 (or QCR6-2). The complex exists as an obligatory dimer and forms supercomplexes (SCs) in the inner mitochondrial membrane with NADH-ubiquinone oxidoreductase (complex I, CI), resulting in different assemblies (supercomplexes SCI(1)III(2) and SCI(2)III(4)).

It localises to the mitochondrion inner membrane. Its function is as follows. Component of the ubiquinol-cytochrome c oxidoreductase, a multisubunit transmembrane complex that is part of the mitochondrial electron transport chain which drives oxidative phosphorylation. The respiratory chain contains 3 multisubunit complexes succinate dehydrogenase (complex II, CII), ubiquinol-cytochrome c oxidoreductase (cytochrome b-c1 complex, complex III, CIII) and cytochrome c oxidase (complex IV, CIV), that cooperate to transfer electrons derived from NADH and succinate to molecular oxygen, creating an electrochemical gradient over the inner membrane that drives transmembrane transport and the ATP synthase. The cytochrome b-c1 complex catalyzes electron transfer from ubiquinol to cytochrome c, linking this redox reaction to translocation of protons across the mitochondrial inner membrane, with protons being carried across the membrane as hydrogens on the quinol. In the process called Q cycle, 2 protons are consumed from the matrix, 4 protons are released into the intermembrane space and 2 electrons are passed to cytochrome c. In Arabidopsis thaliana (Mouse-ear cress), this protein is Cytochrome b-c1 complex subunit 7-2, mitochondrial (QCR7-2).